Here is a 557-residue protein sequence, read N- to C-terminus: Formate--tetrahydrofolate ligase 2 (557 aa).

Residue 66 to 73 (TPAGEGKT) participates in ATP binding.

It belongs to the formate--tetrahydrofolate ligase family.

It carries out the reaction (6S)-5,6,7,8-tetrahydrofolate + formate + ATP = (6R)-10-formyltetrahydrofolate + ADP + phosphate. The protein operates within one-carbon metabolism; tetrahydrofolate interconversion. This is Formate--tetrahydrofolate ligase 2 from Streptococcus pyogenes serotype M6 (strain ATCC BAA-946 / MGAS10394).